A 271-amino-acid polypeptide reads, in one-letter code: Uridine-cytidine kinase 1-B (271 aa).

24–32 (GGTASGKST) contributes to the ATP binding site. Positions 81, 109, 114, 163, 172, and 180 each coordinate substrate. Residue aspartate 209 participates in ATP binding. The interval 240 to 271 (RSQKRTLPGQGDSGGLLLQGKRTHLESSSRPH) is disordered. Residues 246–259 (LPGQGDSGGLLLQG) are compositionally biased toward low complexity. The span at 262–271 (THLESSSRPH) shows a compositional bias: basic and acidic residues.

This sequence belongs to the uridine kinase family.

It carries out the reaction uridine + ATP = UMP + ADP + H(+). It catalyses the reaction cytidine + ATP = CMP + ADP + H(+). It functions in the pathway pyrimidine metabolism; CTP biosynthesis via salvage pathway; CTP from cytidine: step 1/3. Its pathway is pyrimidine metabolism; UMP biosynthesis via salvage pathway; UMP from uridine: step 1/1. Its function is as follows. Phosphorylates uridine and cytidine to uridine monophosphate and cytidine monophosphate. Does not phosphorylate deoxyribonucleosides or purine ribonucleosides. Can use ATP or GTP as a phosphate donor. The chain is Uridine-cytidine kinase 1-B (uck1-b) from Xenopus laevis (African clawed frog).